The primary structure comprises 357 residues: IGF-like family receptor 1 (357 aa).

Positions 1–22 (MGPLRLLPTAVLLLAQAAPWEA) are cleaved as a signal peptide. Residues 23 to 160 (SQHCGRLEYW…HKAPQQAWPS (138 aa)) are Extracellular-facing. A disordered region spans residues 100-147 (IPSGSRGGTGRPCREPVPNKEPCPLTPGKSSILSSQEPSSPGIPSVSW). Residues 129 to 139 (SSILSSQEPSS) are compositionally biased toward low complexity. The helical transmembrane segment at 161–181 (LSFALFLVLVLLVTSAIILLA) threads the bilayer. The Cytoplasmic portion of the chain corresponds to 182–357 (LQRHHRRLDQ…KLGSSGACLA (176 aa)).

The protein localises to the cell membrane. Functionally, probable cell membrane receptor for the IGF-like family protein IGFL. The protein is IGF-like family receptor 1 (IGFLR1) of Bos taurus (Bovine).